A 256-amino-acid polypeptide reads, in one-letter code: Ribonuclease 3 (256 aa).

The RNase III domain occupies Leu-3–Gly-125. Position 38 (Glu-38) interacts with Mg(2+). Asp-42 is an active-site residue. Mg(2+) contacts are provided by Asp-111 and Glu-114. Residue Glu-114 is part of the active site. A DRBM domain is found at Asp-152 to Arg-222. A disordered region spans residues Leu-227–Glu-256.

This sequence belongs to the ribonuclease III family. Homodimer. It depends on Mg(2+) as a cofactor.

Its subcellular location is the cytoplasm. The enzyme catalyses Endonucleolytic cleavage to 5'-phosphomonoester.. In terms of biological role, digests double-stranded RNA. Involved in the processing of primary rRNA transcript to yield the immediate precursors to the large and small rRNAs (23S and 16S). Processes some mRNAs, and tRNAs when they are encoded in the rRNA operon. Processes pre-crRNA and tracrRNA of type II CRISPR loci if present in the organism. This is Ribonuclease 3 from Ralstonia nicotianae (strain ATCC BAA-1114 / GMI1000) (Ralstonia solanacearum).